The following is a 109-amino-acid chain: Putative pterin-4-alpha-carbinolamine dehydratase (109 aa).

Belongs to the pterin-4-alpha-carbinolamine dehydratase family.

The catalysed reaction is (4aS,6R)-4a-hydroxy-L-erythro-5,6,7,8-tetrahydrobiopterin = (6R)-L-erythro-6,7-dihydrobiopterin + H2O. This chain is Putative pterin-4-alpha-carbinolamine dehydratase, found in Vibrio cholerae serotype O1 (strain ATCC 39315 / El Tor Inaba N16961).